A 410-amino-acid polypeptide reads, in one-letter code: WD repeat and FYVE domain-containing protein 1 (410 aa).

6 WD repeats span residues 22–61 (GHQD…QYWP), 66–105 (TMAS…NKMN), 112–150 (AHQN…NMLG), 153–192 (FFSS…CSVI), 197–236 (GHEG…GRTL), and 240–279 (GHHD…EEAP). The segment at 281 to 352 (WLESDSCQKC…VCDSCYDSIK (72 aa)) adopts an FYVE-type zinc-finger fold. C287, C290, C314, C317, C322, C325, C344, and C347 together coordinate Zn(2+). A WD 7 repeat occupies 364–403 (EGKHNISHMSMDVARGLMVTCGTDRVVKIWDMTPVVGCSL). S408 carries the phosphoserine modification.

Binds PtdIns3P in vitro with high specificity over other phosphoinositides. Interacts (via WD repeat 2) with tyrosine-phosphorylated TLR3 (via TIR domain) in response to poly(I:C). Interacts with TLR4 in response to LPS. Interacts with TICAM1 in response to poly(I:C).

Its subcellular location is the early endosome. Positively regulates TLR3- and TLR4-mediated signaling pathways by bridging the interaction between TLR3 or TLR4 and TICAM1. Promotes TLR3/4 ligand-induced activation of transcription factors IRF3 and NF-kappa-B, as well as the production of IFN-beta and inflammatory cytokines. This chain is WD repeat and FYVE domain-containing protein 1 (WDFY1), found in Bos taurus (Bovine).